A 1582-amino-acid polypeptide reads, in one-letter code: Nik-related protein kinase (1582 aa).

The Protein kinase domain maps to 25 to 313 (FSLDKTIGLG…SANMLQHPFV (289 aa)). Residues 31 to 39 (IGLGTYGRI) and K54 contribute to the ATP site. The active-site Proton acceptor is the D177. Low complexity-rich tracts occupy residues 492–507 (QVQSQVSKKQQAQTQT), 527–538 (PEQQRQGQAPEQ), and 551–572 (EQNQAPEQPEVQEQAAEPAQAE). Residues 492–579 (QVQSQVSKKQ…QAETEAEEPE (88 aa)) are disordered. Positions 725–759 (QRRQRRWEDIFNQHEEELRQVDKDKEDESSDNDEV) form a coiled coil. 2 disordered regions span residues 783–859 (EVQE…PPYS) and 926–1156 (ASAD…GSGM). Composition is skewed to polar residues over residues 803–814 (FSSSVPQRSLLE), 825–834 (RSSQNRQNWL), and 850–859 (RRSQSSPPYS). S852 and S855 each carry phosphoserine. The segment covering 926 to 944 (ASADTDGDDDDESNDTFED) has biased composition (acidic residues). 2 stretches are compositionally biased toward basic and acidic residues: residues 965–978 (VCKDHDDDNNKFVD) and 999–1016 (GSCKQDGYDGSRGKEEAY). S1027, S1031, and S1034 each carry phosphoserine. 2 stretches are compositionally biased toward basic and acidic residues: residues 1043-1061 (QEEHAANIGSERRGSEGDG) and 1125-1135 (PDHESDNKDIS). Positions 1136-1154 (ESSTQSDFSANHSSPSKGS) are enriched in polar residues. The 344-residue stretch at 1209–1552 (TSEICCGSLW…RFLCTRGDKL (344 aa)) folds into the CNH domain.

This sequence belongs to the protein kinase superfamily. STE Ser/Thr protein kinase family. STE20 subfamily.

It catalyses the reaction L-seryl-[protein] + ATP = O-phospho-L-seryl-[protein] + ADP + H(+). The enzyme catalyses L-threonyl-[protein] + ATP = O-phospho-L-threonyl-[protein] + ADP + H(+). May phosphorylate cofilin-1 and induce actin polymerization through this process, during the late stages of embryogenesis. Involved in the TNF-alpha-induced signaling pathway. This chain is Nik-related protein kinase (NRK), found in Homo sapiens (Human).